Consider the following 2227-residue polypeptide: Genome polyprotein (2227 aa).

2 short sequence motifs ((L)YPX(n)L motif) span residues 167–171 (YPHGL) and 200–205 (YPVWEL). Residues 766–836 (MMSRIAAGDL…PRKMKGLFSQ (71 aa)) are involved in P1-2A pentamerization. A helical membrane pass occupies residues 1011-1031 (TVEIINTVLCFVKSGILLYVI). Residues 1043–1070 (IGLLRVMNYADIGCSVISCGKVFSKMLE) form a membrane-penetrating ability region. Residues 1127–1152 (KKKDILNILKDNQQKIEKAIEEADNF) are a coiled coil. The region spanning 1204–1366 (HQKLKNLGSI…SFFKNPHNDM (163 aa)) is the SF3 helicase domain. 1230-1237 (GKRGGGKS) contacts ATP. Residues 1462–1482 (WVAVGAAVGILGVLVGGWFVY) traverse the membrane as a helical segment. Position 1499 is an O-(5'-phospho-RNA)-tyrosine (tyrosine 1499). Residues 1514–1728 (DPVESQSTLE…VAKLVTQEMF (215 aa)) enclose the Peptidase C3 domain. Active-site for protease 3C activity residues include histidine 1563, aspartate 1603, and cysteine 1691. Residues 1976–2097 (DVGLDLDFSA…VFSRDVQIDN (122 aa)) enclose the RdRp catalytic domain.

The protein belongs to the picornaviridae polyprotein family. Homodimer. Homomultimer; probably interacts with membranes in a multimeric form. Seems to assemble into amyloid-like fibers. In terms of assembly, homodimer. Monomer. Interacts with protein 3CD. As to quaternary structure, interacts with host ACBD3. Interacts with protein 3AB. In terms of assembly, interacts with human MAVS. As to quaternary structure, homodimer; disulfide-linked. Homopentamer. Homooligomer. In terms of assembly, interacts with capsid protein VP2. Interacts with capsid protein VP3. As to quaternary structure, interacts with capsid protein VP1. Interacts with capsid protein VP3. Interacts with capsid protein VP1. Interacts with capsid protein VP2. Specific enzymatic cleavages by viral protease in vivo yield a variety of precursors and mature proteins. Polyprotein processing intermediates are produced, such as P1-2A which is a functional precursor of the structural proteins, VP0 which is a VP4-VP2 precursor, VP1-2A precursor, 3ABC precursor which is a stable and catalytically active precursor of 3A, 3B and 3C proteins, 3AB and 3CD precursors. The assembly signal 2A is removed from VP1-2A by a host protease, possibly host Cathepsin L. This cleavage occurs over a region of 3 amino-acids probably generating VP1 proteins with heterogeneous C-termini. In terms of processing, during virion maturation, immature virions are rendered infectious following cleavage of VP0 into VP4 and VP2. This maturation seems to be an autocatalytic event triggered by the presence of RNA in the capsid and is followed by a conformational change of the particle. Post-translationally, the assembly signal 2A is removed from VP1-2A by a host protease, possibly host Cathepsin L in naked virions. This cleavage does not occur in enveloped virions. This cleavage occurs over a region of 3 amino-acids probably generating VP1 proteins with heterogeneous C-termini. VPg is uridylylated prior to priming replication into VPg-pUpU. In terms of processing, unlike other picornaviruses, does not seem to be myristoylated.

The protein localises to the virion. It is found in the host endosome. The protein resides in the host multivesicular body. Its subcellular location is the host membrane. It localises to the host mitochondrion outer membrane. The protein localises to the host cytoplasm. It is found in the host cytoplasmic vesicle membrane. It catalyses the reaction RNA(n) + a ribonucleoside 5'-triphosphate = RNA(n+1) + diphosphate. It carries out the reaction a ribonucleoside 5'-triphosphate + H2O = a ribonucleoside 5'-diphosphate + phosphate + H(+). The enzyme catalyses Selective cleavage of Gln-|-Gly bond in the poliovirus polyprotein. In other picornavirus reactions Glu may be substituted for Gln, and Ser or Thr for Gly.. Functionally, capsid proteins VP1, VP2, and VP3 form a closed capsid enclosing the viral positive strand RNA genome. All these proteins contain a beta-sheet structure called beta-barrel jelly roll. Together they form an icosahedral capsid (T=3) composed of 60 copies of each VP1, VP2, and VP3, with a diameter of approximately 300 Angstroms. VP1 is situated at the 12 fivefold axes, whereas VP2 and VP3 are located at the quasi-sixfold axes. The naked capsid interacts with the host receptor HAVCR1 to provide virion attachment to and probably entry into the target cell. In terms of biological role, VP0 precursor is a component of the immature procapsids. Plays a role in the assembly of the 12 pentamers into an icosahedral structure. Has not been detected in mature virions, supposedly owing to its small size. Its function is as follows. Precursor component of immature procapsids that corresponds to an extended form of the structural protein VP1. After maturation, possibly by the host Cathepsin L, the assembly signal 2A is cleaved to give rise to the mature VP1 protein. Functionally, functions as a viroporin. Affects membrane integrity and causes an increase in membrane permeability. Involved in host intracellular membrane rearrangements probably to give rise to the viral factories. Does not disrupt calcium homeostasis or glycoprotein trafficking. Antagonizes the innate immune response of the host by suppressing IFN-beta synthesis, which it achieves by interfering with the RIG-I/IFIH1 pathway. In terms of biological role, affects membrane integrity and causes an increase in membrane permeability. Associates with and induces structural rearrangements of intracellular membranes. Displays RNA-binding activity. Its function is as follows. The precursor 3ABC is targeted to the mitochondrial membrane where protease 3C activity cleaves and inhibits the host antiviral protein MAVS, thereby disrupting activation of IRF3 through the IFIH1/MDA5 pathway. In vivo, the protease activity of 3ABC precursor is more efficient in cleaving the 2BC precursor than that of protein 3C. The 3ABC precursor may therefore play a role in the proteolytic processing of the polyprotein. Possible viroporin. Functionally, interacts with the 3CD precursor and with RNA structures found at both the 5'- and 3'-termini of the viral genome. Since the 3AB precursor contains the hydrophobic domain 3A, it probably anchors the whole viral replicase complex to intracellular membranes on which viral RNA synthesis occurs. In terms of biological role, may serve as membrane anchor to the 3AB and 3ABC precursors via its hydrophobic domain. May interact with RNA. Acts as a primer for viral RNA replication and remains covalently bound to viral genomic RNA. VPg is uridylylated prior to priming replication into VPg-pUpU. The VPg-pUpU is then used as primer on the genomic RNA poly(A) by the RNA-dependent RNA polymerase to replicate the viral genome. Its function is as follows. Cysteine protease that generates mature viral proteins from the precursor polyprotein. In addition to its proteolytic activity, it binds to viral RNA, and thus influences viral genome replication. RNA and substrate bind cooperatively to the protease. Cleaves IKBKG/NEMO to impair innate immune signaling. Cleaves host PABPC1 which may participate in the switch of viral translation to RNA synthesis. Functionally, interacts with the 3AB precursor and with RNA structures found at both the 5'- and 3'-termini of the viral genome. Disrupts TLR3 signaling by degrading the host adapter protein TICAM1/TRIF. In terms of biological role, RNA-directed RNA polymerase 3D-POL replicates genomic and antigenomic RNA by recognizing replications specific signals. The protein is Genome polyprotein of Human hepatitis A virus genotype IA (isolate H2) (HHAV).